Here is a 626-residue protein sequence, read N- to C-terminus: Phosphomethylpyrimidine synthase (626 aa).

Substrate-binding positions include Asn237, Met266, Tyr295, His331, 351–353 (SRG), 392–395 (DGLR), and Glu431. Residue His435 coordinates Zn(2+). Tyr458 provides a ligand contact to substrate. A Zn(2+)-binding site is contributed by His499. Positions 579, 582, and 587 each coordinate [4Fe-4S] cluster.

This sequence belongs to the ThiC family. Homodimer. [4Fe-4S] cluster is required as a cofactor.

It catalyses the reaction 5-amino-1-(5-phospho-beta-D-ribosyl)imidazole + S-adenosyl-L-methionine = 4-amino-2-methyl-5-(phosphooxymethyl)pyrimidine + CO + 5'-deoxyadenosine + formate + L-methionine + 3 H(+). The protein operates within cofactor biosynthesis; thiamine diphosphate biosynthesis. Functionally, catalyzes the synthesis of the hydroxymethylpyrimidine phosphate (HMP-P) moiety of thiamine from aminoimidazole ribotide (AIR) in a radical S-adenosyl-L-methionine (SAM)-dependent reaction. This is Phosphomethylpyrimidine synthase from Cupriavidus pinatubonensis (strain JMP 134 / LMG 1197) (Cupriavidus necator (strain JMP 134)).